A 488-amino-acid polypeptide reads, in one-letter code: Replication-associated protein (488 aa).

Positions 462–488 (PRPRQMQRSATEHNLFQYARSGRDPTS) are disordered.

The protein resides in the host nucleus. Functionally, plays an essential for the replication of viral DNA. Presumably cleaves viral genomic dsRNA replicative form to initiate rolling circle replication. The chain is Replication-associated protein from Chaetoceros diatodnavirus 1 (Chaetoceros setoense DNA virus).